The chain runs to 1640 residues: Basal body protein 10 (1640 aa).

Positions 11–64 are homodimerization; sequence VLRRKLEALGYSDPLEPASLQLVQKLVEDLVHTTDSYTAVKQQCAKQAQEIAAF. A coiled-coil region spans residues 93-148; it reads AERHEREAREHYTAVKRLEDTIAELSYWKHAAAEKLASADKENAGLRKRCEELAKL. The tract at residues 154-185 is disordered; sequence SGAATPQSVAPKISSRSPIRVAPPPSPPRPRQ. Over residues 174 to 183 the composition is skewed to pro residues; that stretch reads VAPPPSPPRP. 10 coiled-coil regions span residues 191-232, 260-332, 370-411, 461-722, 758-960, 1010-1030, 1059-1086, 1129-1282, 1323-1494, and 1523-1557; these read LQAA…RDVE, ILQL…LQDT, VERL…AQSR, FAAL…AEAD, ARQM…AQAA, GEAL…LVRE, RASA…LAAE, INQY…LQAS, AKDQ…AERD, and AELA…TRAT. The span at 1592-1618 shows a compositional bias: low complexity; that stretch reads GQGQVQGPAGTAPAAAAGAPGPQPGQA. The disordered stretch occupies residues 1592 to 1640; the sequence is GQGQVQGPAGTAPAAAAGAPGPQPGQAQAGGFGGAHGGGSISLSGGPRR. The segment covering 1619 to 1631 has biased composition (gly residues); that stretch reads QAGGFGGAHGGGS.

It belongs to the CEP135/TSGA10 family. As to quaternary structure, homodimer.

It is found in the cytoplasm. It localises to the cytoskeleton. Its subcellular location is the microtubule organizing center. The protein localises to the centrosome. The protein resides in the centriole. Its function is as follows. Microtubule-binding protein essential for cytoskeletal organization (e.g. rootlet microtubule bundles) and flagellar basal body/centriole assembly. The sequence is that of Basal body protein 10 from Chlamydomonas reinhardtii (Chlamydomonas smithii).